Reading from the N-terminus, the 121-residue chain is Ribosome-binding factor A (121 aa).

The protein belongs to the RbfA family. As to quaternary structure, monomer. Binds 30S ribosomal subunits, but not 50S ribosomal subunits or 70S ribosomes.

It is found in the cytoplasm. Functionally, one of several proteins that assist in the late maturation steps of the functional core of the 30S ribosomal subunit. Associates with free 30S ribosomal subunits (but not with 30S subunits that are part of 70S ribosomes or polysomes). Required for efficient processing of 16S rRNA. May interact with the 5'-terminal helix region of 16S rRNA. This is Ribosome-binding factor A from Paraburkholderia phytofirmans (strain DSM 17436 / LMG 22146 / PsJN) (Burkholderia phytofirmans).